A 429-amino-acid polypeptide reads, in one-letter code: 3-phosphoshikimate 1-carboxyvinyltransferase (429 aa).

The 3-phosphoshikimate site is built by lysine 20, serine 21, and arginine 25. Residue lysine 20 coordinates phosphoenolpyruvate. Residues glycine 89 and arginine 118 each coordinate phosphoenolpyruvate. 3-phosphoshikimate contacts are provided by serine 164, serine 165, glutamine 166, serine 192, aspartate 311, and lysine 338. Glutamine 166 provides a ligand contact to phosphoenolpyruvate. Aspartate 311 acts as the Proton acceptor in catalysis. Arginine 342 and arginine 384 together coordinate phosphoenolpyruvate.

This sequence belongs to the EPSP synthase family. In terms of assembly, monomer.

It is found in the cytoplasm. The enzyme catalyses 3-phosphoshikimate + phosphoenolpyruvate = 5-O-(1-carboxyvinyl)-3-phosphoshikimate + phosphate. It participates in metabolic intermediate biosynthesis; chorismate biosynthesis. In terms of biological role, catalyzes the transfer of the enolpyruvyl moiety of phosphoenolpyruvate (PEP) to the 5-hydroxyl of shikimate-3-phosphate (S3P) to produce enolpyruvyl shikimate-3-phosphate and inorganic phosphate. This is 3-phosphoshikimate 1-carboxyvinyltransferase from Methanococcus vannielii (strain ATCC 35089 / DSM 1224 / JCM 13029 / OCM 148 / SB).